Reading from the N-terminus, the 599-residue chain is MSDLSHIRNFSIIAHIDHGKSTLADRFIQMCGGLAEREMEAQVLDSMDLERERGITIKAHSVTLYYKARDGITYQLNFIDTPGHVDFTYEVSRSLAACEGALLVVDAGQGVEAQSVANCYTAIEQGLEVMPVLNKIDLPQADPERVKEEIEKIIGIDATDAVTCSAKTGLGVDEVLERLVTTIPAPTGNIEDPLQALIIDSWFDNYLGVVSLVRVRHGRVKKGDKILVKSTGKIHLVDSVGVFNPKHTATTDLKAGEVGFIIAGIKDIHGAPVGDTLTLSSTPDVEVLPGFKRIQPQVYAGLFPVSSDDFEDFREALQKLTLNDSSLQYTPESSDALGFGFRCGFLGMLHMEIIQERLEREYDLDLITTAPTVIFELQLKNGETIYVDNPSKLPDLSAIEDMREPIVRANILVPQEHLGNVITLCIEKRGVQHDMLFLGSQVQVTYDLPMNEVVLDFFDRLKSTSRGYASLDYHFDRYQSANLVKLDVLINGEKVDALALIVHRDNAHYKGRALTEKMKELIPRQMFDVAIQAAIGGQIVARTTVKALRKNVLAKCYGGDVSRKRKLLEKQKAGKKRMKQVGNVEIPQEAFLAVLRLDS.

The 183-residue stretch at 5 to 187 folds into the tr-type G domain; it reads SHIRNFSIIA…RLVTTIPAPT (183 aa). Residues 17 to 22 and 134 to 137 each bind GTP; these read DHGKST and NKID.

Belongs to the TRAFAC class translation factor GTPase superfamily. Classic translation factor GTPase family. LepA subfamily.

It is found in the cell inner membrane. It catalyses the reaction GTP + H2O = GDP + phosphate + H(+). Required for accurate and efficient protein synthesis under certain stress conditions. May act as a fidelity factor of the translation reaction, by catalyzing a one-codon backward translocation of tRNAs on improperly translocated ribosomes. Back-translocation proceeds from a post-translocation (POST) complex to a pre-translocation (PRE) complex, thus giving elongation factor G a second chance to translocate the tRNAs correctly. Binds to ribosomes in a GTP-dependent manner. In Pseudomonas fluorescens (strain ATCC BAA-477 / NRRL B-23932 / Pf-5), this protein is Elongation factor 4.